The chain runs to 950 residues: Kinase suppressor of Ras 2 (950 aa).

Positions 239 to 296 (PPLESGHRSLPPSPRQRHAVRTPPRTPNIVTTVTPPGTPPMRKKNKLKPPGTPPPSSR) are disordered. The segment covering 259–273 (RTPPRTPNIVTTVTP) has biased composition (low complexity). 2 positions are modified to phosphothreonine: threonine 272 and threonine 276. The segment at 412-456 (KHRFSTKYWMSQTCTVCGKGMLFGLKCKNCKLKCHNKCTKEAPPC) adopts a Phorbol-ester/DAG-type zinc-finger fold. Positions 413, 425, 428, 438, 441, 446, 449, and 456 each coordinate Zn(2+). A Phosphoserine; by MARK3 modification is found at serine 474. Threonine 497 carries the post-translational modification Phosphothreonine. Residues 498-556 (LPKTNKINKDHIPVPYQPDSSSNPSSTTSSTPSSPAPPLPPSATPPSPLHPSPQCTRQQ) form a disordered region. Residues 517–530 (SSSNPSSTTSSTPS) are compositionally biased toward low complexity. A compositionally biased stretch (pro residues) spans 531 to 548 (SPAPPLPPSATPPSPLHP). Residues 666–931 (LEIGELIGKG…TKLMDMLEKL (266 aa)) form the Protein kinase domain. Position 672–680 (672–680 (IGKGRFGQV)) interacts with ATP. Catalysis depends on aspartate 786, which acts as the Proton donor/acceptor. ATP-binding residues include lysine 788 and aspartate 803.

It belongs to the protein kinase superfamily. TKL Ser/Thr protein kinase family. In terms of assembly, heterodimerizes (via N-terminus) with BRAF (via N-terminus) in a MAP2K1/MEK1-dependent manner. Interacts with BRAF; this increases the low intrinsic protein kinase activity of KSR2. Interacts with MAP2K1, forming a heterodimer that can dimerize to form a heterotetramer. Interacts with MAP3K8, MAPK, RAS and RAF. In terms of processing, phosphorylated on Ser-474 by MARK3. As to expression, mainly expressed in brain and kidney.

It is found in the cytoplasm. It localises to the membrane. It carries out the reaction L-seryl-[protein] + ATP = O-phospho-L-seryl-[protein] + ADP + H(+). The enzyme catalyses L-threonyl-[protein] + ATP = O-phospho-L-threonyl-[protein] + ADP + H(+). Kinase activity is inhibited by ASC24. In terms of biological role, location-regulated scaffold connecting MEK to RAF. Has very low protein kinase activity and can phosphorylate MAP2K1 at several Ser and Thr residues with very low efficiency (in vitro). Acts as MAP2K1/MEK1-dependent allosteric activator of BRAF; upon binding to MAP2K1/MEK1, dimerizes with BRAF and promotes BRAF-mediated phosphorylation of MAP2K1/MEK1. Interaction with BRAF enhances KSR2-mediated phosphorylation of MAP2K1 (in vitro). Blocks MAP3K8 kinase activity and MAP3K8-mediated signaling. Acts as a negative regulator of MAP3K3-mediated activation of ERK, JNK and NF-kappa-B pathways, inhibiting MAP3K3-mediated interleukin-8 production. The protein is Kinase suppressor of Ras 2 of Homo sapiens (Human).